A 40-amino-acid chain; its full sequence is U4-ctenitoxin-Co1c (40 aa).

4 cysteine pairs are disulfide-bonded: cysteine 3–cysteine 20, cysteine 10–cysteine 26, cysteine 19–cysteine 40, and cysteine 28–cysteine 38.

In terms of tissue distribution, expressed by the venom gland.

The protein localises to the secreted. Its function is as follows. Not toxic to mice by intracerebroventricular injection. In Ctenus ornatus (Brazilian spider), this protein is U4-ctenitoxin-Co1c.